A 435-amino-acid chain; its full sequence is tRNA(Ile)-lysidine synthase (435 aa).

23–28 (SGGMDS) is an ATP binding site.

Belongs to the tRNA(Ile)-lysidine synthase family.

The protein resides in the cytoplasm. The catalysed reaction is cytidine(34) in tRNA(Ile2) + L-lysine + ATP = lysidine(34) in tRNA(Ile2) + AMP + diphosphate + H(+). Functionally, ligates lysine onto the cytidine present at position 34 of the AUA codon-specific tRNA(Ile) that contains the anticodon CAU, in an ATP-dependent manner. Cytidine is converted to lysidine, thus changing the amino acid specificity of the tRNA from methionine to isoleucine. In Xanthomonas campestris pv. campestris (strain 8004), this protein is tRNA(Ile)-lysidine synthase.